Here is an 85-residue protein sequence, read N- to C-terminus: Small ribosomal subunit protein uS17 (85 aa).

This sequence belongs to the universal ribosomal protein uS17 family. As to quaternary structure, part of the 30S ribosomal subunit.

Its function is as follows. One of the primary rRNA binding proteins, it binds specifically to the 5'-end of 16S ribosomal RNA. The polypeptide is Small ribosomal subunit protein uS17 (Syntrophus aciditrophicus (strain SB)).